Reading from the N-terminus, the 500-residue chain is Maturase K (500 aa).

Belongs to the intron maturase 2 family. MatK subfamily.

The protein resides in the plastid. The protein localises to the chloroplast. In terms of biological role, usually encoded in the trnK tRNA gene intron. Probably assists in splicing its own and other chloroplast group II introns. The chain is Maturase K from Brasenia schreberi (Water shield).